The chain runs to 614 residues: Membrane protein insertase YidC (614 aa).

Residues 6–26 form a helical membrane-spanning segment; it reads IVLLIIFSTSLLFLWDAWIKE. Polar residues-rich tracts occupy residues 34 to 48 and 60 to 70; these read PAIT…STQS and ELTSSQASPDT. The disordered stretch occupies residues 34–87; sequence PAITQADSSAGSTQSRNDDSLPVPGSELTSSQASPDTNGIPASGGNGDSVTPRL. The next 4 membrane-spanning stretches (helical) occupy residues 380–400, 450–470, 484–504, and 524–544; these read WGVA…PLSA, FPIL…LAAV, LSSP…MFVQ, and PVAF…YSLV. The segment at 562–614 is disordered; it reads TAPSKDTPEPPVSKQVNSSENPETTANSPADSPKQPQTPANNPRKMYKRTRKK. Residues 575–602 show a composition bias toward polar residues; that stretch reads KQVNSSENPETTANSPADSPKQPQTPAN.

This sequence belongs to the OXA1/ALB3/YidC family. Type 1 subfamily. As to quaternary structure, interacts with the Sec translocase complex via SecD. Specifically interacts with transmembrane segments of nascent integral membrane proteins during membrane integration.

The protein localises to the cell inner membrane. Functionally, required for the insertion and/or proper folding and/or complex formation of integral membrane proteins into the membrane. Involved in integration of membrane proteins that insert both dependently and independently of the Sec translocase complex, as well as at least some lipoproteins. Aids folding of multispanning membrane proteins. The protein is Membrane protein insertase YidC of Nitrosomonas europaea (strain ATCC 19718 / CIP 103999 / KCTC 2705 / NBRC 14298).